We begin with the raw amino-acid sequence, 345 residues long: Nuclear hormone receptor family nhr-176 (345 aa).

Positions 7–82 form a DNA-binding region, nuclear receptor; that stretch reads IQPCLVCGQS…AGMLEKMVFS (76 aa). An NR C4-type zinc finger spans residues 10-30; the sequence is CLVCGQSSNSILFGAPSCRAC. The NR C4-type; degenerate zinc-finger motif lies at 46–65; the sequence is NNCLGECSFAKKSMKPCQSC. Residues 92 to 342 enclose the NR LBD domain; it reads FEKSILEELE…CPLYAISTNS (251 aa). Positions 331–342 are AF-2; sequence SGCPLYAISTNS.

The protein localises to the nucleus. In terms of biological role, nuclear hormone receptor. Binds to xenobiotic ligand thiabendazole (TBZ), in vitro. Involved in the up-regulation of phase I detoxification genes, such as probable cytochrome P450 cyp-35d1, in response to TBZ. In Caenorhabditis elegans, this protein is Nuclear hormone receptor family nhr-176.